Reading from the N-terminus, the 89-residue chain is Small ribosomal subunit protein uS15 (89 aa).

The protein belongs to the universal ribosomal protein uS15 family. As to quaternary structure, part of the 30S ribosomal subunit. Forms a bridge to the 50S subunit in the 70S ribosome, contacting the 23S rRNA.

One of the primary rRNA binding proteins, it binds directly to 16S rRNA where it helps nucleate assembly of the platform of the 30S subunit by binding and bridging several RNA helices of the 16S rRNA. In terms of biological role, forms an intersubunit bridge (bridge B4) with the 23S rRNA of the 50S subunit in the ribosome. This is Small ribosomal subunit protein uS15 from Pseudomonas putida (strain ATCC 700007 / DSM 6899 / JCM 31910 / BCRC 17059 / LMG 24140 / F1).